Reading from the N-terminus, the 529-residue chain is ATP synthase F(1) complex catalytic subunit beta, mitochondrial (529 aa).

The transit peptide at 1–46 (MLSLVGRVASASASGALRGLNPLAALPQAHLLLRTAPAGVHPARDY) directs the protein to the mitochondrion. The O-linked (GlcNAc) serine glycan is linked to serine 106. Lysine 124, lysine 133, and lysine 161 each carry N6-acetyllysine; alternate. N6-succinyllysine; alternate is present on residues lysine 124, lysine 133, and lysine 161. N6-acetyllysine is present on lysine 198. Residues glycine 209, valine 210, glycine 211, lysine 212, threonine 213, and valine 214 each coordinate ADP. Glycine 209 is an ATP binding site. Glycine 209, valine 210, glycine 211, lysine 212, and threonine 213 together coordinate phosphate. The ATP site is built by glycine 211, lysine 212, threonine 213, and valine 214. Threonine 213 is a Mg(2+) binding site. Glutamate 238 contacts Mg(2+). Position 239 (arginine 239) interacts with ATP. N6-acetyllysine; alternate is present on residues lysine 259 and lysine 264. Lysine 259 and lysine 264 each carry N6-succinyllysine; alternate. Phosphothreonine is present on threonine 312. Serine 415 is subject to Phosphoserine. Position 426 is an N6-acetyllysine (lysine 426). The residue at position 433 (serine 433) is a Phosphoserine. 2 positions are modified to N6-acetyllysine: lysine 480 and lysine 485. Lysine 522 carries the post-translational modification N6-acetyllysine; alternate. Residue lysine 522 is modified to N6-succinyllysine; alternate. At serine 529 the chain carries Phosphoserine.

Belongs to the ATPase alpha/beta chains family. Homotrimer. Component of the ATP synthase complex composed at least of ATP5F1A/subunit alpha, ATP5F1B/subunit beta, ATP5MC1/subunit c (homooctomer), MT-ATP6/subunit a, MT-ATP8/subunit 8, ATP5ME/subunit e, ATP5MF/subunit f, ATP5MG/subunit g, ATP5MK/subunit k, ATP5MJ/subunit j, ATP5F1C/subunit gamma, ATP5F1D/subunit delta, ATP5F1E/subunit epsilon, ATP5PF/subunit F6, ATP5PB/subunit b, ATP5PD/subunit d, ATP5PO/subunit OSCP. ATP synthase complex consists of a soluble F(1) head domain (subunits alpha(3) and beta(3)) - the catalytic core - and a membrane F(0) domain - the membrane proton channel (subunits c, a, 8, e, f, g, k and j). These two domains are linked by a central stalk (subunits gamma, delta, and epsilon) rotating inside the F1 region and a stationary peripheral stalk (subunits F6, b, d, and OSCP). Interacts with PPIF. Interacts with BCL2L1 isoform BCL-X(L); the interaction mediates the association of BCL2L1 isoform BCL-X(L) with the mitochondrial membrane F(1)F(0) ATP synthase and enhances neurons metabolic efficiency. Interacts with CLN5 and PPT1. Interacts with S100A1; this interaction increases F1-ATPase activity. Interacts with MTLN. Interacts with TTC5/STRAP; the interaction results in decreased mitochondrial ATP production.

It is found in the mitochondrion inner membrane. The catalysed reaction is ATP + H2O + 4 H(+)(in) = ADP + phosphate + 5 H(+)(out). Its function is as follows. Catalytic subunit beta, of the soluble F(1) head domain within the mitochondrial ATP synthase complex (F(1)F(0) ATP synthase or complex V) that produces ATP from ADP and phosphate inorganique in the presence of a proton gradient across the membrane which is generated by electron transport complexes of the respiratory chain. With the non-catalytic subunit alpha (ATP5F1A), forms the catalytic core in the F(1) domain. ATP synthase complex consist of two structural domains, F(1) - containing the extramembraneous catalytic core, and F(0) - containing the membrane proton channel, linked together by a central stalk and a peripheral stalk. During catalysis, ATP synthesis in the catalytic domain of F(1) is coupled via a rotary mechanism of the central stalk subunits to proton translocation. Functionally, catalytic subunit beta, of the mitochondrial membrane ATP synthase complex (F(1)F(0) ATP synthase or Complex V) that produces ATP from ADP in the presence of a proton gradient across the membrane which is generated by electron transport complexes of the respiratory chain. ATP synthase complex consist of a soluble F(1) head domain - the catalytic core - and a membrane F(1) domain - the membrane proton channel. These two domains are linked by a central stalk rotating inside the F(1) region and a stationary peripheral stalk. During catalysis, ATP synthesis in the catalytic domain of F(1) is coupled via a rotary mechanism of the central stalk subunits to proton translocation. In vivo, can only synthesize ATP although its ATP hydrolase activity can be activated artificially in vitro. With the subunit alpha (ATP5F1A), forms the catalytic core in the F(1) domain. The polypeptide is ATP synthase F(1) complex catalytic subunit beta, mitochondrial (Rattus norvegicus (Rat)).